The primary structure comprises 603 residues: UvrABC system protein C (603 aa).

One can recognise a GIY-YIG domain in the interval 15 to 92 (DQPGCYLMKD…IKKHDPRFNI (78 aa)). The 36-residue stretch at 197 to 232 (KTVKNDLMKKMQEAAENMEFEKAGEFRDQINAIETT) folds into the UVR domain.

Belongs to the UvrC family. Interacts with UvrB in an incision complex.

It localises to the cytoplasm. Its function is as follows. The UvrABC repair system catalyzes the recognition and processing of DNA lesions. UvrC both incises the 5' and 3' sides of the lesion. The N-terminal half is responsible for the 3' incision and the C-terminal half is responsible for the 5' incision. This is UvrABC system protein C from Listeria innocua serovar 6a (strain ATCC BAA-680 / CLIP 11262).